Consider the following 152-residue polypeptide: Large-conductance mechanosensitive channel (152 aa).

3 consecutive transmembrane segments (helical) span residues 21-41, 44-64, and 92-112; these read IDLAVGVIIGAAFGKIVDSLV, VVMPLVNFILGGSVDFSNKFL, and GNFITIIINFVLLAFVIFWMV.

This sequence belongs to the MscL family. In terms of assembly, homopentamer.

The protein resides in the cell inner membrane. In terms of biological role, channel that opens in response to stretch forces in the membrane lipid bilayer. May participate in the regulation of osmotic pressure changes within the cell. This chain is Large-conductance mechanosensitive channel, found in Bordetella pertussis (strain Tohama I / ATCC BAA-589 / NCTC 13251).